A 446-amino-acid chain; its full sequence is Tubulin beta-2 chain (446 aa).

GTP is bound by residues glutamine 11, glutamate 69, serine 138, glycine 142, threonine 143, glycine 144, asparagine 204, and asparagine 226. Glutamate 69 is a binding site for Mg(2+).

Belongs to the tubulin family. Dimer of alpha and beta chains. A typical microtubule is a hollow water-filled tube with an outer diameter of 25 nm and an inner diameter of 15 nM. Alpha-beta heterodimers associate head-to-tail to form protofilaments running lengthwise along the microtubule wall with the beta-tubulin subunit facing the microtubule plus end conferring a structural polarity. Microtubules usually have 13 protofilaments but different protofilament numbers can be found in some organisms and specialized cells. It depends on Mg(2+) as a cofactor.

Its subcellular location is the cytoplasm. The protein localises to the cytoskeleton. Its function is as follows. Tubulin is the major constituent of microtubules, a cylinder consisting of laterally associated linear protofilaments composed of alpha- and beta-tubulin heterodimers. Microtubules grow by the addition of GTP-tubulin dimers to the microtubule end, where a stabilizing cap forms. Below the cap, tubulin dimers are in GDP-bound state, owing to GTPase activity of alpha-tubulin. This Hypocrea rufa (Trichoderma viride) protein is Tubulin beta-2 chain (tub2).